The chain runs to 301 residues: GTPase Era (301 aa).

Positions lysine 8–glutamate 174 constitute an Era-type G domain. Positions glycine 16 to serine 23 are G1. Glycine 16–serine 23 lines the GTP pocket. The G2 stretch occupies residues glutamine 42–asparagine 46. Residues aspartate 63–glycine 66 form a G3 region. GTP contacts are provided by residues aspartate 63–isoleucine 67 and asparagine 124–aspartate 127. A G4 region spans residues asparagine 124–aspartate 127. The segment at isoleucine 153–alanine 155 is G5. Positions isoleucine 197–arginine 282 constitute a KH type-2 domain.

This sequence belongs to the TRAFAC class TrmE-Era-EngA-EngB-Septin-like GTPase superfamily. Era GTPase family. As to quaternary structure, monomer.

It is found in the cytoplasm. The protein resides in the cell membrane. In terms of biological role, an essential GTPase that binds both GDP and GTP, with rapid nucleotide exchange. Plays a role in 16S rRNA processing and 30S ribosomal subunit biogenesis and possibly also in cell cycle regulation and energy metabolism. This chain is GTPase Era, found in Lactobacillus delbrueckii subsp. bulgaricus (strain ATCC 11842 / DSM 20081 / BCRC 10696 / JCM 1002 / NBRC 13953 / NCIMB 11778 / NCTC 12712 / WDCM 00102 / Lb 14).